Reading from the N-terminus, the 346-residue chain is UDP-3-O-acylglucosamine N-acyltransferase (346 aa).

Catalysis depends on histidine 253, which acts as the Proton acceptor.

The protein belongs to the transferase hexapeptide repeat family. LpxD subfamily. In terms of assembly, homotrimer.

It catalyses the reaction a UDP-3-O-[(3R)-3-hydroxyacyl]-alpha-D-glucosamine + a (3R)-hydroxyacyl-[ACP] = a UDP-2-N,3-O-bis[(3R)-3-hydroxyacyl]-alpha-D-glucosamine + holo-[ACP] + H(+). Its pathway is bacterial outer membrane biogenesis; LPS lipid A biosynthesis. Catalyzes the N-acylation of UDP-3-O-acylglucosamine using 3-hydroxyacyl-ACP as the acyl donor. Is involved in the biosynthesis of lipid A, a phosphorylated glycolipid that anchors the lipopolysaccharide to the outer membrane of the cell. The protein is UDP-3-O-acylglucosamine N-acyltransferase of Rickettsia akari (strain Hartford).